Reading from the N-terminus, the 127-residue chain is Large ribosomal subunit protein bL12 (127 aa).

A disordered region spans residues 101 to 127 (VKTGVSKEEAEDAKKQLVESGAEVEIK). The span at 105-117 (VSKEEAEDAKKQL) shows a compositional bias: basic and acidic residues.

It belongs to the bacterial ribosomal protein bL12 family. Homodimer. Part of the ribosomal stalk of the 50S ribosomal subunit. Forms a multimeric L10(L12)X complex, where L10 forms an elongated spine to which 2 to 4 L12 dimers bind in a sequential fashion. Binds GTP-bound translation factors.

In terms of biological role, forms part of the ribosomal stalk which helps the ribosome interact with GTP-bound translation factors. Is thus essential for accurate translation. This chain is Large ribosomal subunit protein bL12, found in Geobacter metallireducens (strain ATCC 53774 / DSM 7210 / GS-15).